The chain runs to 182 residues: Large ribosomal subunit protein uL5 (182 aa).

It belongs to the universal ribosomal protein uL5 family. Part of the 50S ribosomal subunit; part of the 5S rRNA/L5/L18/L25 subcomplex. Contacts the 5S rRNA and the P site tRNA. Forms a bridge to the 30S subunit in the 70S ribosome.

This is one of the proteins that bind and probably mediate the attachment of the 5S RNA into the large ribosomal subunit, where it forms part of the central protuberance. In the 70S ribosome it contacts protein S13 of the 30S subunit (bridge B1b), connecting the 2 subunits; this bridge is implicated in subunit movement. Contacts the P site tRNA; the 5S rRNA and some of its associated proteins might help stabilize positioning of ribosome-bound tRNAs. The polypeptide is Large ribosomal subunit protein uL5 (Nostoc sp. (strain PCC 7120 / SAG 25.82 / UTEX 2576)).